Reading from the N-terminus, the 126-residue chain is Small ribosomal subunit protein bS6 (126 aa).

Positions 107–126 are disordered; sequence RDRERGERSERPRDDFAPAA.

This sequence belongs to the bacterial ribosomal protein bS6 family.

In terms of biological role, binds together with bS18 to 16S ribosomal RNA. The polypeptide is Small ribosomal subunit protein bS6 (Caulobacter sp. (strain K31)).